We begin with the raw amino-acid sequence, 201 residues long: Dermatopontin (201 aa).

Residues 1–18 (MDLTLLWVLLPLVTTAWG) form the signal peptide. Q19 bears the Pyrrolidone carboxylic acid mark. Residues 19 to 186 (QYGGYGYPYQ…AVERDRQWKF (168 aa)) form a 2 X 53-55 AA tandem repeats region. Position 23 is a sulfotyrosine (Y23). 4 consecutive repeat copies span residues 26-79 (PYQQ…ACMP), 70-75 (DRQWNY), 80-135 (TPQS…CCRY), and 125-130 (DREWQF). Cystine bridges form between C50–C77, C90–C132, C106–C133, C139–C196, and C143–C189. Residues 70–186 (DRQWNYACMP…AVERDRQWKF (117 aa)) form a 3 X 6 AA tandem repeats of D-R-[EQ]-W-[NQK]-[FY] region. Sulfotyrosine occurs at positions 162, 164, and 167. The stretch at 181 to 186 (DRQWKF) is one 2-3 repeat. Y194 is subject to Sulfotyrosine.

This sequence belongs to the dermatopontin family. In terms of assembly, interacts with TGFB1, DCN and collagen. Post-translationally, sulfated on tyrosine residue(s).

The protein localises to the secreted. It localises to the extracellular space. Its subcellular location is the extracellular matrix. Seems to mediate adhesion by cell surface integrin binding. May serve as a communication link between the dermal fibroblast cell surface and its extracellular matrix environment. Enhances TGFB1 activity. Inhibits cell proliferation. Accelerates collagen fibril formation, and stabilizes collagen fibrils against low-temperature dissociation. The sequence is that of Dermatopontin (Dpt) from Mus musculus (Mouse).